Reading from the N-terminus, the 152-residue chain is Small ribosomal subunit protein bS6 (152 aa).

This sequence belongs to the bacterial ribosomal protein bS6 family.

Binds together with bS18 to 16S ribosomal RNA. The chain is Small ribosomal subunit protein bS6 from Bdellovibrio bacteriovorus (strain ATCC 15356 / DSM 50701 / NCIMB 9529 / HD100).